Reading from the N-terminus, the 578-residue chain is MDNLRECINRKRRLLALPDVPETSDAFLSDLRHLYMCVAFCDQHKTTGDESRFTNLELLDQDEALGAQRAFEAKHGIKGGSLGDVLDHELKKVIEFTFTSGSLYIAEQRKRKTQADSIIVCVSEGLNDFSVSHGVLDMGLVETGVNAVRDFCTQNGIPMKINQVGSTRTPTPISTCKISEQITRQINSTITERKMETVLAAIAIKPELKXTQKGCXXCKELEDENILWMDPQFCEIDESFPYRGGPYGNFLQELLLTTNDVETNGKDREEVVKXILDNKAFTVESGECIITLPDKMTCFGEQEKKRPATIDEVRTAGERFEQSVKPKTQRYGRLSDKWMELEKFIFTASKTEVDTFLSVGTERLESVGVCVGALHRATTTRIIRPMIQGGKCWGMMFKTKSKMGDTRKEGYCHAIIFGKGEDKSGQNKMTMMGKTVHWHLRVVKSKGDWMAQQLCANKSRIWQHDPELVTEGVTVLMTPFSQKIATISRWRAMRLDSMFHVSSAWHHSPACEAASAMLRKFVEIVHAINQKRDWGVVGSMEDMVKEVEEIGEHLQTACDFRVYNXCKALIQKIAVSTQ.

The RNA polymerase is composed of three subunits: PB1, PB2 and PA. In terms of processing, phosphorylated on serines and threonines by host kinases.

In terms of biological role, implicated in endonuclease cleavage of capped RNA primers. Displays an elongation factor activity in viral RNA synthesis. Dispensable for viral transcription, but not replication. The protein is Polymerase acidic protein of Infectious salmon anemia virus (isolate Atlantic salmon/Norway/810/9/99) (ISAV).